Here is a 1015-residue protein sequence, read N- to C-terminus: Protein HIRA (1015 aa).

WD repeat units follow at residues 11 to 53 and 68 to 107; these read HNGK…QEDD and NHLACVNCVRWSNSGMYLASGGDDKLIMVWKRATYIGPST. Ser111 is modified (phosphoserine). 5 WD repeats span residues 129–168, 172–211, 220–263, 266–322, and 326–367; these read SHSGDVMDVAWSPHDAWLASCSVDNTVVIWNAVKFPEILA, GHSGLVKGLTWDPVGKYIASQADDRSLKVWRTLDWQLETS, GGTT…TNMD, GHRK…PLVV, and LFDK…DPLS. Residues 408–431 form a disordered region; it reads QQQQQLDQKNATTRETSSASSVTG. The span at 413-431 shows a compositional bias: polar residues; the sequence is LDQKNATTRETSSASSVTG. The segment at 421–479 is interaction with ASF1A; the sequence is RETSSASSVTGVVNGESLEDIRKNLLKKQVETRTADGRRRITPLCIAQLDTGDFSTAFF. An interaction with CCNA1 region spans residues 421–727; it reads RETSSASSVT…RLKCNREGKE (307 aa). Residues 439-475 are required for repression of histone gene transcription; sequence EDIRKNLLKKQVETRTADGRRRITPLCIAQLDTGDFS. Composition is skewed to low complexity over residues 494–507 and 540–556; these read SSPSGQQLLPLDSS and ATSTPAASSPSVLTTPS. The disordered stretch occupies residues 494 to 558; that stretch reads SSPSGQQLLP…PSVLTTPSKI (65 aa). Position 548 is a phosphoserine (Ser548). Residue Thr554 is modified to Phosphothreonine. Ser556 carries the post-translational modification Phosphoserine. Thr575 carries the phosphothreonine modification. A phosphoserine mark is found at Ser583, Ser608, Ser609, Ser610, Ser612, Ser659, and Ser673. Interaction with PAX3 stretches follow at residues 593-737 and 738-826; these read KEQN…SRVL and TAAG…SQIL. An interaction with histone H2B region spans residues 594–824; that stretch reads EQNLVKELRS…LSGSDMTVSQ (231 aa). The segment covering 603–617 has biased composition (basic and acidic residues); sequence SRELESSSDSDEKVH. The tract at residues 603–623 is disordered; sequence SRELESSSDSDEKVHLAKPSS. Residues 736 to 1015 are interaction with histone H4; sequence VLTAAGSCDV…QEQLDILRDK (280 aa).

It belongs to the WD repeat HIR1 family. In terms of assembly, interacts with CCNA1, HIRIP3 and NFU1/HIRIP5. Part of a complex which includes ASF1A, CABIN1, histone H3.3, histone H4 and UBN1. Interacts with histone H2B, histone H3-3B, PAX3 and PAX7. Post-translationally, sumoylated. Phosphorylated by CDK2/CCNA1 and CDK2/CCNE1 on Thr-554 in vitro. Also phosphorylated on Thr-554 in vivo. In terms of tissue distribution, expressed in cerebrum, cerebellum, heart, kidney, liver, lung and spleen.

It localises to the nucleus. The protein localises to the PML body. Required for the periodic repression of histone gene transcription during the cell cycle. Cooperates with ASF1A to promote replication-independent chromatin assembly. Required for the formation of senescence-associated heterochromatin foci (SAHF) and efficient senescence-associated cell cycle exit. This chain is Protein HIRA (Hira), found in Mus musculus (Mouse).